The sequence spans 181 residues: Acireductone dioxygenase (181 aa).

Fe(2+) contacts are provided by H97, H99, E103, and H141. Ni(2+) contacts are provided by H97, H99, E103, and H141.

It belongs to the acireductone dioxygenase (ARD) family. Monomer. Requires Fe(2+) as cofactor. Ni(2+) serves as cofactor.

It carries out the reaction 1,2-dihydroxy-5-(methylsulfanyl)pent-1-en-3-one + O2 = 3-(methylsulfanyl)propanoate + CO + formate + 2 H(+). It catalyses the reaction 1,2-dihydroxy-5-(methylsulfanyl)pent-1-en-3-one + O2 = 4-methylsulfanyl-2-oxobutanoate + formate + 2 H(+). It functions in the pathway amino-acid biosynthesis; L-methionine biosynthesis via salvage pathway; L-methionine from S-methyl-5-thio-alpha-D-ribose 1-phosphate: step 5/6. Its function is as follows. Catalyzes 2 different reactions between oxygen and the acireductone 1,2-dihydroxy-3-keto-5-methylthiopentene (DHK-MTPene) depending upon the metal bound in the active site. Fe-containing acireductone dioxygenase (Fe-ARD) produces formate and 2-keto-4-methylthiobutyrate (KMTB), the alpha-ketoacid precursor of methionine in the methionine recycle pathway. Ni-containing acireductone dioxygenase (Ni-ARD) produces methylthiopropionate, carbon monoxide and formate, and does not lie on the methionine recycle pathway. The sequence is that of Acireductone dioxygenase from Pseudomonas syringae pv. tomato (strain ATCC BAA-871 / DC3000).